We begin with the raw amino-acid sequence, 185 residues long: Lipid A acyltransferase PagP (185 aa).

The signal sequence occupies residues 1-14 (MKLKPVLYLLMLLG). Cysteine 15 carries N-palmitoyl cysteine lipidation. Cysteine 15 is lipidated: S-diacylglycerol cysteine. Residues histidine 57, aspartate 100, and serine 101 contribute to the active site.

This sequence belongs to the lipid A palmitoyltransferase family. As to quaternary structure, homodimer.

The protein resides in the cell outer membrane. It carries out the reaction a lipid A + a 1,2-diacyl-sn-glycero-3-phosphocholine = a hepta-acyl lipid A + a 2-acyl-sn-glycero-3-phosphocholine. The catalysed reaction is a lipid IVA + a 1,2-diacyl-sn-glycero-3-phosphocholine = a lipid IVB + a 2-acyl-sn-glycero-3-phosphocholine. It catalyses the reaction a lipid IIA + a 1,2-diacyl-sn-glycero-3-phosphocholine = a lipid IIB + a 2-acyl-sn-glycero-3-phosphocholine. Transfers a fatty acid residue from the sn-1 position of a phospholipid to the N-linked hydroxyfatty acid chain on the proximal unit of lipid A or its precursors. This is Lipid A acyltransferase PagP from Erwinia sp. (strain Ejp617).